The chain runs to 211 residues: Uridine kinase (211 aa).

G12–T19 is an ATP binding site.

Belongs to the uridine kinase family.

It is found in the cytoplasm. It carries out the reaction uridine + ATP = UMP + ADP + H(+). The catalysed reaction is cytidine + ATP = CMP + ADP + H(+). It participates in pyrimidine metabolism; CTP biosynthesis via salvage pathway; CTP from cytidine: step 1/3. Its pathway is pyrimidine metabolism; UMP biosynthesis via salvage pathway; UMP from uridine: step 1/1. The polypeptide is Uridine kinase (Halalkalibacterium halodurans (strain ATCC BAA-125 / DSM 18197 / FERM 7344 / JCM 9153 / C-125) (Bacillus halodurans)).